A 170-amino-acid chain; its full sequence is Xanthine-guanine phosphoribosyltransferase (170 aa).

Residues 41–42 (RG) and 98–106 (DDLTDTGKT) contribute to the 5-phospho-alpha-D-ribose 1-diphosphate site. A Mg(2+)-binding site is contributed by Asp99. Asp102 contacts guanine. Residue Asp102 coordinates xanthine. Residue 102-106 (DTGKT) participates in GMP binding.

This sequence belongs to the purine/pyrimidine phosphoribosyltransferase family. XGPT subfamily. As to quaternary structure, homotetramer. It depends on Mg(2+) as a cofactor.

Its subcellular location is the cell inner membrane. The catalysed reaction is GMP + diphosphate = guanine + 5-phospho-alpha-D-ribose 1-diphosphate. The enzyme catalyses XMP + diphosphate = xanthine + 5-phospho-alpha-D-ribose 1-diphosphate. It carries out the reaction IMP + diphosphate = hypoxanthine + 5-phospho-alpha-D-ribose 1-diphosphate. The protein operates within purine metabolism; GMP biosynthesis via salvage pathway; GMP from guanine: step 1/1. It functions in the pathway purine metabolism; XMP biosynthesis via salvage pathway; XMP from xanthine: step 1/1. Its function is as follows. Purine salvage pathway enzyme that catalyzes the transfer of the ribosyl-5-phosphate group from 5-phospho-alpha-D-ribose 1-diphosphate (PRPP) to the N9 position of the 6-oxopurines guanine and xanthine to form the corresponding ribonucleotides GMP (guanosine 5'-monophosphate) and XMP (xanthosine 5'-monophosphate), with the release of PPi. To a lesser extent, also acts on hypoxanthine. The protein is Xanthine-guanine phosphoribosyltransferase of Brucella abortus (strain 2308).